Here is a 454-residue protein sequence, read N- to C-terminus: ABSCISIC ACID-INSENSITIVE 5-like protein 6 (454 aa).

Phosphoserine is present on residues Ser32, Ser55, and Ser126. Thr169 is subject to Phosphothreonine. The region spanning 372-435 (IERRQKRMIK…KNQLLEPLRQ (64 aa)) is the bZIP domain. The tract at residues 374–393 (RRQKRMIKNRESAARSRARK) is basic motif. Residues 400–414 (LEAEIAQLKELNEEL) form a leucine-zipper region.

Belongs to the bZIP family. ABI5 subfamily. DNA-binding heterodimer. Interacts with ABI3 and the AFP proteins AFP1, AFP2, AFP3 and AFP4. In terms of tissue distribution, expressed in roots and flowers.

The protein resides in the nucleus. Binds to the ABA-responsive element (ABRE). Mediates stress-responsive ABA signaling. This chain is ABSCISIC ACID-INSENSITIVE 5-like protein 6 (ABF3), found in Arabidopsis thaliana (Mouse-ear cress).